The chain runs to 486 residues: MFPRETKWNISFAGCGFLGVYHIGVASCLREHAPFLVANATHIYGASAGALTATALVTGACLGEAGANIIEVSKEARKRFLGPLHPSFNLVKTIRGCLLKTLPADCHERANGRLGISLTRVSDGENVIISHFSSKDELIQANVCSTFIPVYCGLIPPTLQGVRYVDGGISDNLPLYELKNTITVSPFSGESDICPQDSSTNIHELRVTNTSIQFNLRNLYRLSKALFPPEPMVLREMCKQGYRDGLRFLRRNGLLNQPNPLLALPPVVPQEEDAEEAAVVEERAGEEDQLQPYRKDRILEHLPARLNEALLEACVEPKDLMTTLSNMLPVRLATAMMVPYTLPLESAVSFTIRLLEWLPDVPEDIRWMKEQTGSICQYLVMRAKRKLGDHLPSRLSEQVELRRAQSLPSVPLSCATYSEALPNWVRNNLSLGDALAKWEECQRQLLLGLFCTNVAFPPDALRMRAPASPTAADPATPQDPPGLPPC.

Residues 1-8 are Cytoplasmic-facing; it reads MFPRETKW. Residues 9–29 form a helical membrane-spanning segment; that stretch reads NISFAGCGFLGVYHIGVASCL. The PNPLA domain occupies 10–179; that stretch reads ISFAGCGFLG…SDNLPLYELK (170 aa). The GXGXXG motif lies at 14–19; the sequence is GCGFLG. Over 30-42 the chain is Extracellular; that stretch reads REHAPFLVANATH. The N-linked (GlcNAc...) asparagine glycan is linked to asparagine 39. Residues 43–63 traverse the membrane as a helical segment; that stretch reads IYGASAGALTATALVTGACLG. The GXSXG motif lies at 45–49; the sequence is GASAG. Serine 47 (nucleophile) is an active-site residue. Residues 64–137 are Cytoplasmic-facing; that stretch reads EAGANIIEVS…IISHFSSKDE (74 aa). Residue lysine 92 forms a Glycyl lysine isopeptide (Lys-Gly) (interchain with G-Cter in ubiquitin) linkage. A helical transmembrane segment spans residues 138–158; the sequence is LIQANVCSTFIPVYCGLIPPT. Over 159-331 the chain is Extracellular; sequence LQGVRYVDGG…TTLSNMLPVR (173 aa). Aspartate 166 functions as the Proton acceptor in the catalytic mechanism. Positions 166–168 match the DGA/G motif; the sequence is DGG. The chain crosses the membrane as a helical span at residues 332 to 352; the sequence is LATAMMVPYTLPLESAVSFTI. Residues 353–486 lie on the Cytoplasmic side of the membrane; it reads RLLEWLPDVP…PQDPPGLPPC (134 aa). The residue at position 374 (serine 374) is a Phosphoserine; in vitro. 2 positions are modified to phosphoserine; by PKA: serine 396 and serine 406. Phosphoserine; in vitro is present on residues serine 430 and serine 468. Over residues 465-476 the composition is skewed to low complexity; sequence APASPTAADPAT. The tract at residues 465–486 is disordered; sequence APASPTAADPATPQDPPGLPPC. The segment covering 477-486 has biased composition (pro residues); the sequence is PQDPPGLPPC.

In terms of assembly, interacts with ABHD5; this association stimulates PNPLA2 triglyceride hydrolase activity. Interacts with SERPINF1; this interaction stimulates the phospholipase A2 activity of PNPLA2. Despite a colocalization in lipid droplets, it probably does not interact with PLIN. Interacts with PLIN5; prevents interaction with ABHD5. Interacts with FAF2. Post-translationally, phosphorylation at Ser-406 by PKA is increased during fasting and moderate intensity exercise, and moderately increases lipolytic activity. In terms of processing, ubiquitinated by PEX2 in response to reactive oxygen species (ROS), leading to its degradation. Ubiquitination is stimulated by LDAH. As to expression, expressed at high levels in white and brown adipose tissue, and to a lesser degree in testis and cardiac muscle. Barely detected in liver, spleen, thymus, kidney, skeletal muscle, and brain. Among the white adipose depots, gonadal fat showed the highest level of expression compared with inguinal and renal white adipose tissues.

Its subcellular location is the lipid droplet. It is found in the cell membrane. The protein localises to the cytoplasm. It catalyses the reaction a triacylglycerol + H2O = a diacylglycerol + a fatty acid + H(+). The enzyme catalyses a triacylglycerol + H2O = a 1,2-diacylglycerol + a fatty acid + H(+). It carries out the reaction a triacylglycerol + H2O = a 1,3-diacylglycerol + a fatty acid + H(+). The catalysed reaction is a triacyl-sn-glycerol + H2O = a 2,3-diacyl-sn-glycerol + a fatty acid + H(+). It catalyses the reaction a triacyl-sn-glycerol + H2O = a 1,3-diacyl-sn-glycerol + a fatty acid + H(+). The enzyme catalyses 1,2,3-tri-(9Z-octadecenoyl)-glycerol + H2O = 1,3-di-(9Z-octadecenoyl)-glycerol + (9Z)-octadecenoate + H(+). It carries out the reaction 1,2,3-tri-(9Z)-hexadecenoylglycerol + H2O = 1,3-di-(9Z)-hexadecenoylglycerol + (9Z)-hexadecenoate + H(+). The catalysed reaction is 1,2,3-tri-(9Z,12Z)-octadecadienoylglycerol + H2O = 1,3-di-(9Z,12Z)-octadecadienoylglycerol + (9Z,12Z)-octadecadienoate + H(+). It catalyses the reaction 1,2,3-tri-(9Z,12Z,15Z)-octadecatrienoylglycerol + H2O = 1,3-di-(9Z,12Z,15Z)-octadecatrienoylglycerol + (9Z,12Z,15Z)-octadecatrienoate + H(+). The enzyme catalyses 1,3-di-(9Z)-octadecenoyl-2-hexadecanoylglycerol + H2O = 1,3-di-(9Z-octadecenoyl)-glycerol + hexadecanoate + H(+). It carries out the reaction 1,2-di-(9Z)-octadecenoyl-3-hexadecanoyl-sn-glycerol + H2O = 1-(9Z)-octadecenoyl-3-hexadecanoyl-sn-glycerol + (9Z)-octadecenoate + H(+). The catalysed reaction is 1-hexadecanoyl-2,3-di-(9Z)-octadecenoyl-sn-glycerol + H2O = 1-hexadecanoyl-3-(9Z)-octadecenoyl-sn-glycerol + (9Z)-octadecenoate + H(+). It catalyses the reaction 1,2,3-tri-(9Z-octadecenoyl)-glycerol + H2O = 2,3-di-(9Z)-octadecenoyl-sn-glycerol + (9Z)-octadecenoate + H(+). The enzyme catalyses 1,2,3-tri-(9Z)-hexadecenoylglycerol + H2O = 2,3-di-(9Z)-hexadecenoyl-sn-glycerol + (9Z)-hexadecenoate + H(+). It carries out the reaction 1,2,3-tri-(9Z,12Z)-octadecadienoylglycerol + H2O = 2,3-di-(9Z,12Z)-octadecadienoyl-sn-glycerol + (9Z,12Z)-octadecadienoate + H(+). The catalysed reaction is 1,2,3-tri-(9Z,12Z,15Z)-octadecatrienoylglycerol + H2O = 2,3-di-(9Z,12Z,15Z)-octadecatrienoyl-sn-glycerol + (9Z,12Z,15Z)-octadecatrienoate + H(+). It catalyses the reaction 1,3-di-(9Z)-octadecenoyl-2-hexadecanoylglycerol + H2O = 2-hexadecanoyl-3-(9Z)-octadecenoyl-sn-glycerol + (9Z)-octadecenoate + H(+). The enzyme catalyses 1-hexadecanoyl-2,3-di-(9Z)-octadecenoyl-sn-glycerol + H2O = 2,3-di-(9Z)-octadecenoyl-sn-glycerol + hexadecanoate + H(+). It carries out the reaction 1,2-di-(9Z)-octadecenoyl-3-hexadecanoyl-sn-glycerol + H2O = 2-(9Z-octadecenoyl)-3-hexadecanoyl-sn-glycerol + (9Z)-octadecenoate + H(+). The catalysed reaction is 1,2-di-(9Z-octadecenoyl)-glycerol + (9Z)-octadecenoate + H(+) = 1,2,3-tri-(9Z-octadecenoyl)-glycerol + H2O. It catalyses the reaction a 1-acylglycerol + a 1,3-diacylglycerol = a triacylglycerol + glycerol. The enzyme catalyses a 1-acylglycerol + a 1,2-diacylglycerol = a triacylglycerol + glycerol. It carries out the reaction 2 a 1-acylglycerol = a 1,2-diacylglycerol + glycerol. The catalysed reaction is a triacylglycerol + all-trans-retinol = an all-trans-retinyl ester + a diacylglycerol. It catalyses the reaction 1-(9Z-octadecenoyl)-glycerol + 1,3-di-(9Z-octadecenoyl)-glycerol = 1,2,3-tri-(9Z-octadecenoyl)-glycerol + glycerol. The enzyme catalyses 1-(9Z-octadecenoyl)-glycerol + 1,2-di-(9Z-octadecenoyl)-glycerol = 1,2,3-tri-(9Z-octadecenoyl)-glycerol + glycerol. It carries out the reaction 2 1-(9Z-octadecenoyl)-glycerol = 1,2-di-(9Z-octadecenoyl)-glycerol + glycerol. The catalysed reaction is 1,2,3-tri-(9Z-octadecenoyl)-glycerol + all-trans-retinol = all-trans-retinyl 9Z-octadecenoate + di-(9Z)-octadecenoylglycerol. It catalyses the reaction a 1,2-diacyl-sn-glycero-3-phosphocholine + H2O = a 1-acyl-sn-glycero-3-phosphocholine + a fatty acid + H(+). The enzyme catalyses 1,2,3-tri-(9Z-octadecenoyl)-glycerol + 9-hydroxy-octadecanoate = 9-(9Z-octadecenoyloxy)-octadecanoate + 2,3-di-(9Z)-octadecenoyl-sn-glycerol. It carries out the reaction 1-hexadecanoyl-2,3-di-(9Z)-octadecenoyl-sn-glycerol + 9-hydroxy-octadecanoate = 9-hexadecanoyloxy-octadecanoate + 2,3-di-(9Z)-octadecenoyl-sn-glycerol. The catalysed reaction is 1,2,3-tri-(10Z)-heptadecenoylglycerol + 9-hydroxy-octadecanoate = 2,3-di-(10Z-heptadecenoyl)-sn-glycerol + 9-(10Z-heptadecenoyloxy)-octadecanoate. It catalyses the reaction 1,2,3-tri-(9Z,12Z)-octadecadienoylglycerol + 9-hydroxy-octadecanoate = 2,3-di-(9Z,12Z)-octadecadienoyl-sn-glycerol + 9-(9Z,12Z-octadecadienoyloxy)-octadecanoate. The enzyme catalyses 1,2,3-tri-(9Z)-hexadecenoylglycerol + 9-hydroxy-octadecanoate = 2,3-di-(9Z)-hexadecenoyl-sn-glycerol + 9-(9Z-hexadecenoyloxy)-octadecanoate. It carries out the reaction 9-hydroxy-octadecanoate + 1,2-di-(9Z-octadecenoyl)-sn-glycerol = 9-(9Z-octadecenoyloxy)-octadecanoate + 2-(9Z-octadecenoyl)-glycerol. The catalysed reaction is 1-hexadecanoyl-2,3-di-(9Z)-octadecenoyl-sn-glycerol + 9-hydroxy-octadecanoate = 1-hexadecanoyl-3-(9Z)-octadecenoyl-sn-glycerol + 9-(9Z-octadecenoyloxy)-octadecanoate. Its pathway is glycerolipid metabolism; triacylglycerol degradation. Stimulated by PKA-dependent PLIN phosphorylation. In terms of biological role, catalyzes the initial step in triglyceride hydrolysis in adipocyte and non-adipocyte lipid droplets. Exhibits a strong preference for the hydrolysis of long-chain fatty acid esters at the sn-2 position of the glycerol backbone and acts coordinately with LIPE/HLS and DGAT2 within the lipolytic cascade. Also possesses acylglycerol transacylase and phospholipase A2 activities. Transfers fatty acid from triglyceride to retinol, hydrolyzes retinylesters, and generates 1,3-diacylglycerol from triglycerides. Regulates adiposome size and may be involved in the degradation of adiposomes. Catalyzes the formation of an ester bond between hydroxy fatty acids and fatty acids derived from triglycerides or diglycerides to generate fatty acid esters of hydroxy fatty acids (FAHFAs) in adipocytes. Acts antagonistically with LDAH in regulation of cellular lipid stores. Inhibits LDAH-stimulated lipid droplet fusion. May play an important role in energy homeostasis. May play a role in the response of the organism to starvation, enhancing hydrolysis of triglycerides and providing free fatty acids to other tissues to be oxidized in situations of energy depletion. The sequence is that of Patatin-like phospholipase domain-containing protein 2 from Mus musculus (Mouse).